The following is a 123-amino-acid chain: Large ribosomal subunit protein uL29 (123 aa).

It belongs to the universal ribosomal protein uL29 family.

This Theileria lestoquardi protein is Large ribosomal subunit protein uL29 (RPL35).